Consider the following 114-residue polypeptide: Putative movement protein (114 aa).

The chain crosses the membrane as a helical span at residues 27-47; sequence LIGIILLVTVCLIVLWVCIML. The segment at 79-114 is disordered; sequence RTPFEATGPERERNWDARRQSTTVNPASQPNTGSVF. Positions 86 to 97 are enriched in basic and acidic residues; the sequence is GPERERNWDARR. Positions 98–114 are enriched in polar residues; it reads QSTTVNPASQPNTGSVF.

The protein belongs to the nanovirus movement protein family.

It localises to the host cell membrane. May transport viral genome to neighboring plant cells directly through plasmosdesmata, without any budding. The movement protein allows efficient cell to cell propagation, by bypassing the host cell wall barrier. The polypeptide is Putative movement protein (DNA-M) (Faba bean necrotic yellows virus (isolate Syrian SV292-88) (FBNYV)).